The chain runs to 144 residues: Large ribosomal subunit protein uL16 (144 aa).

The protein belongs to the universal ribosomal protein uL16 family. In terms of assembly, part of the 50S ribosomal subunit.

In terms of biological role, binds 23S rRNA and is also seen to make contacts with the A and possibly P site tRNAs. The polypeptide is Large ribosomal subunit protein uL16 (Bacillus subtilis (strain 168)).